A 121-amino-acid chain; its full sequence is Neuromedin-B (121 aa).

An N-terminal signal peptide occupies residues 1 to 24 (MTLRARGARLLGGLLFFTLLAAGA). Position 56 is a methionine amide (Met56). Positions 60 to 121 (SLEPPNPSLL…RRLLVQTLEK (62 aa)) are excised as a propeptide.

This sequence belongs to the bombesin/neuromedin-B/ranatensin family. In terms of tissue distribution, higher expression in the central nervous system (CNS) than in peripheral tissues. Highest levels are found in the olfactory bulb. Relatively high levels in the CNS (including the cerebral cortex, cerebellum, spinal cord, medulla oblongata, midbrain, hypothalamus, hippocampus, and hypophysis) and in peripheral tissues such as the pancreas, adrenal gland, testis, ovary and cecum. Moderate levels are found in the rectum, heart and pons with low expression levels detected in the bone marrow and duodenum. Other tissues show no or low levels of expression.

It localises to the secreted. Its subcellular location is the cell projection. It is found in the neuron projection. Stimulates smooth muscle contraction. Induces sighing by acting directly on the pre-Botzinger complex, a cluster of several thousand neurons in the ventrolateral medulla responsible for inspiration during respiratory activity. Contributes to the induction of sneezing following exposure to chemical irritants or allergens which causes release of NMB by nasal sensory neurons and activation of NMBR-expressing neurons in the sneeze-evoking region of the brainstem. These in turn activate neurons of the caudal ventral respiratory group, giving rise to the sneezing response. Contributes to induction of acute itch, possibly through activation of the NMBR receptor on dorsal root ganglion neurons. Increases expression of NMBR and steroidogenic mediators STAR, CYP11A1 and HSD3B1 in Leydig cells, induces secretion of testosterone by Leydig cells and also promotes Leydig cell proliferation. Plays a role in the innate immune response to influenza A virus infection by enhancing interferon alpha expression and reducing expression of IL6. Plays a role in CSF1-induced proliferation of osteoclast precursors by contributing to positive regulation of the expression of the CSF1 receptor CSF1R. The sequence is that of Neuromedin-B (NMB) from Sus scrofa (Pig).